We begin with the raw amino-acid sequence, 528 residues long: Capsule biosynthesis protein CapD proenzyme (528 aa).

The signal sequence occupies residues 1–26; that stretch reads MNSFKWGKKIILFCLIVSLMGGIGVS. The active-site Nucleophile is the Thr-352. Residues Thr-352, 429–432, and Arg-520 contribute to the poly-gamma-D-glutamate site; that span reads GGNR.

It belongs to the gamma-glutamyltransferase family. This enzyme consists of two polypeptide chains, which are synthesized in precursor form from a single polypeptide. Post-translationally, cleaved by autocatalysis into a large and a small subunit.

It participates in capsule biogenesis; capsule polysaccharide biosynthesis. Functionally, transpeptidase that cleaves the poly-gamma-D-glutamate capsule and catalyzes the formation of an amide bond with the side-chain amino group of meso-diaminopimelic acid (m-DAP) in the peptidoglycan scaffold. Degradation of the high-molecular weight capsule (H-capsule) to the lower-molecular weight capsule (L-capsule), which is released from the bacterial cell surface. The production of L-capsule is essential to mediate escape from host defenses. This chain is Capsule biosynthesis protein CapD proenzyme (capD), found in Bacillus anthracis.